The primary structure comprises 431 residues: Histidinol dehydrogenase (431 aa).

NAD(+) is bound by residues Tyr127, Gln189, and Asn212. Residues Ser237, Gln259, and His262 each coordinate substrate. Zn(2+) contacts are provided by Gln259 and His262. Catalysis depends on proton acceptor residues Glu326 and His327. Substrate is bound by residues His327, Asp360, Glu414, and His419. Asp360 is a Zn(2+) binding site. His419 provides a ligand contact to Zn(2+).

The protein belongs to the histidinol dehydrogenase family. Requires Zn(2+) as cofactor.

The catalysed reaction is L-histidinol + 2 NAD(+) + H2O = L-histidine + 2 NADH + 3 H(+). Its pathway is amino-acid biosynthesis; L-histidine biosynthesis; L-histidine from 5-phospho-alpha-D-ribose 1-diphosphate: step 9/9. In terms of biological role, catalyzes the sequential NAD-dependent oxidations of L-histidinol to L-histidinaldehyde and then to L-histidine. The polypeptide is Histidinol dehydrogenase (Xanthomonas euvesicatoria pv. vesicatoria (strain 85-10) (Xanthomonas campestris pv. vesicatoria)).